A 926-amino-acid polypeptide reads, in one-letter code: Alpha-aminoadipic semialdehyde synthase, mitochondrial (926 aa).

The N-terminal 27 residues, 1 to 27 (MLQVHRTGLGRLGVSLSKGLHHKAVLA), are a transit peptide targeting the mitochondrion. The interval 28 to 476 (VRREDVNAWE…ESRERAQSLS (449 aa)) is lysine-ketoglutarate reductase. N6-acetyllysine is present on residues lysine 48 and lysine 56. Lysine 93 is modified (N6-acetyllysine; alternate). Residue lysine 93 is modified to N6-succinyllysine; alternate. Lysine 128 carries the post-translational modification N6-acetyllysine. Lysine 138 carries the N6-acetyllysine; alternate modification. At lysine 138 the chain carries N6-succinyllysine; alternate. Position 274 is an N6-succinyllysine (lysine 274). At lysine 286 the chain carries N6-acetyllysine; alternate. Residue lysine 286 is modified to N6-succinyllysine; alternate. N6-succinyllysine is present on lysine 333. The residue at position 458 (lysine 458) is an N6-acetyllysine; alternate. Residue lysine 458 is modified to N6-succinyllysine; alternate. Positions 477–926 (MGTRRKVLVL…IYTTQSTIKP (450 aa)) are saccharopine dehydrogenase. 3 residues coordinate NAD(+): serine 488, aspartate 512, and glutamine 516. Lysine 523 carries the post-translational modification N6-acetyllysine; alternate. Lysine 523 is subject to N6-succinyllysine; alternate. Residue isoleucine 533 participates in NAD(+) binding. Position 535 is an N6-acetyllysine; alternate (lysine 535). Lysine 535 carries the N6-succinyllysine; alternate modification. Leucine 554, alanine 576, and serine 577 together coordinate NAD(+). L-saccharopine is bound at residue 577–578 (SY). Position 584 is an N6-acetyllysine; alternate (lysine 584). N6-succinyllysine; alternate is present on lysine 584. NAD(+) is bound by residues leucine 603, aspartate 604, and proline 605. Position 604 (aspartate 604) interacts with L-saccharopine. Residue arginine 703 coordinates L-saccharopine. N6-acetyllysine is present on lysine 707. 724–726 (TLR) contributes to the L-saccharopine binding site. An N6-succinyllysine modification is found at lysine 732. An N6-acetyllysine modification is found at lysine 739. Position 761 is an N6-acetyllysine; alternate (lysine 761). An N6-succinyllysine; alternate modification is found at lysine 761. Residue lysine 780 is modified to N6-acetyllysine.

In the N-terminal section; belongs to the AlaDH/PNT family. This sequence in the C-terminal section; belongs to the saccharopine dehydrogenase family. As to quaternary structure, homotetramer. In terms of tissue distribution, expressed in all 16 tissues examined with highest expression in the liver.

It is found in the mitochondrion. It carries out the reaction L-saccharopine + NADP(+) + H2O = L-lysine + 2-oxoglutarate + NADPH + H(+). The catalysed reaction is L-saccharopine + NAD(+) + H2O = (S)-2-amino-6-oxohexanoate + L-glutamate + NADH + H(+). It functions in the pathway amino-acid degradation; L-lysine degradation via saccharopine pathway; glutaryl-CoA from L-lysine: step 1/6. The protein operates within amino-acid degradation; L-lysine degradation via saccharopine pathway; glutaryl-CoA from L-lysine: step 2/6. Its function is as follows. Bifunctional enzyme that catalyzes the first two steps in lysine degradation. The polypeptide is Alpha-aminoadipic semialdehyde synthase, mitochondrial (Homo sapiens (Human)).